Here is an 898-residue protein sequence, read N- to C-terminus: Phosphoenolpyruvate carboxylase (898 aa).

Catalysis depends on residues His-138 and Lys-561.

Belongs to the PEPCase type 1 family. Mg(2+) is required as a cofactor.

It catalyses the reaction oxaloacetate + phosphate = phosphoenolpyruvate + hydrogencarbonate. In terms of biological role, forms oxaloacetate, a four-carbon dicarboxylic acid source for the tricarboxylic acid cycle. The polypeptide is Phosphoenolpyruvate carboxylase (Streptococcus pneumoniae serotype 4 (strain ATCC BAA-334 / TIGR4)).